Reading from the N-terminus, the 380-residue chain is Alcohol dehydrogenase-like 4 (380 aa).

Residues cysteine 47, threonine 49, histidine 70, cysteine 100, cysteine 103, cysteine 106, cysteine 114, and cysteine 180 each coordinate Zn(2+). Residues threonine 49 and histidine 70 each contribute to the an alcohol site. Threonine 49 provides a ligand contact to NAD(+). Residues 205-210 (GLGAVG), aspartate 229, lysine 234, 298-300 (LGV), phenylalanine 325, and arginine 375 each bind NAD(+).

This sequence belongs to the zinc-containing alcohol dehydrogenase family. Class-III subfamily. Homodimer. The cofactor is Zn(2+).

It is found in the cytoplasm. The enzyme catalyses a primary alcohol + NAD(+) = an aldehyde + NADH + H(+). It carries out the reaction a secondary alcohol + NAD(+) = a ketone + NADH + H(+). The sequence is that of Alcohol dehydrogenase-like 4 from Arabidopsis thaliana (Mouse-ear cress).